The chain runs to 283 residues: Polyamine aminopropyltransferase (283 aa).

Residues 5-238 (TTWIDEYQKG…GIWSWTFASK (234 aa)) enclose the PABS domain. Residue Gln-32 participates in S-methyl-5'-thioadenosine binding. The spermidine site is built by His-63 and Asp-87. S-methyl-5'-thioadenosine contacts are provided by residues Glu-107 and 139 to 140 (DG). Asp-158 functions as the Proton acceptor in the catalytic mechanism. 158–161 (DCSD) serves as a coordination point for spermidine.

The protein belongs to the spermidine/spermine synthase family. Homodimer or homotetramer.

It localises to the cytoplasm. The catalysed reaction is S-adenosyl 3-(methylsulfanyl)propylamine + putrescine = S-methyl-5'-thioadenosine + spermidine + H(+). Its pathway is amine and polyamine biosynthesis; spermidine biosynthesis; spermidine from putrescine: step 1/1. In terms of biological role, catalyzes the irreversible transfer of a propylamine group from the amino donor S-adenosylmethioninamine (decarboxy-AdoMet) to putrescine (1,4-diaminobutane) to yield spermidine. The sequence is that of Polyamine aminopropyltransferase from Prochlorococcus marinus (strain MIT 9515).